The primary structure comprises 59 residues: Potassium channel toxin alpha-KTx 3.5 (59 aa).

The signal sequence occupies residues 1–22; it reads MKVFSAVLIILFVCSMIIGINA. 3 cysteine pairs are disulfide-bonded: C29–C49, C35–C54, and C39–C56. The interaction with Ca(2+)-activated K(+) channels stretch occupies residues 47-54; the sequence is GKCMNGKC.

Belongs to the short scorpion toxin superfamily. Potassium channel inhibitor family. Alpha-KTx 03 subfamily. In terms of tissue distribution, expressed by the venom gland.

It is found in the secreted. Its function is as follows. Has also been shown to inhibit with high potency Kv1.3/KCNA3 and with low potency Kv1.1/KCNA1 and Kv1.2/KCNA2 voltage-gated potassium channels. Also binds and inhibits the molluscan calcium-activated potassium channels KCa (Kd=135 nM). In Androctonus australis (Sahara scorpion), this protein is Potassium channel toxin alpha-KTx 3.5 (KTX2).